The primary structure comprises 62 residues: Large ribosomal subunit protein uL30 (62 aa).

It belongs to the universal ribosomal protein uL30 family. In terms of assembly, part of the 50S ribosomal subunit.

This Staphylococcus carnosus (strain TM300) protein is Large ribosomal subunit protein uL30.